Reading from the N-terminus, the 249-residue chain is Urease accessory protein UreG (249 aa).

Basic and acidic residues predominate over residues 1-13 (MHLGHEEFQRTDG). The segment at 1-34 (MHLGHEEFQRTDGRASTGPADAGPAGAGRAPRIG) is disordered. Residues 18-33 (GPADAGPAGAGRAPRI) show a composition bias toward low complexity. Residue 37-44 (GPVGSGKT) participates in GTP binding. The disordered stretch occupies residues 229–249 (PRGGSYDASDASNASQPLNRM). Residues 238 to 249 (DASNASQPLNRM) show a composition bias toward polar residues.

Belongs to the SIMIBI class G3E GTPase family. UreG subfamily. In terms of assembly, homodimer. UreD, UreF and UreG form a complex that acts as a GTP-hydrolysis-dependent molecular chaperone, activating the urease apoprotein by helping to assemble the nickel containing metallocenter of UreC. The UreE protein probably delivers the nickel.

It localises to the cytoplasm. In terms of biological role, facilitates the functional incorporation of the urease nickel metallocenter. This process requires GTP hydrolysis, probably effectuated by UreG. This is Urease accessory protein UreG from Frankia casuarinae (strain DSM 45818 / CECT 9043 / HFP020203 / CcI3).